The following is a 456-amino-acid chain: Exodeoxyribonuclease 7 large subunit (456 aa).

This sequence belongs to the XseA family. Heterooligomer composed of large and small subunits.

The protein localises to the cytoplasm. The catalysed reaction is Exonucleolytic cleavage in either 5'- to 3'- or 3'- to 5'-direction to yield nucleoside 5'-phosphates.. In terms of biological role, bidirectionally degrades single-stranded DNA into large acid-insoluble oligonucleotides, which are then degraded further into small acid-soluble oligonucleotides. The chain is Exodeoxyribonuclease 7 large subunit from Azotobacter vinelandii (strain DJ / ATCC BAA-1303).